A 353-amino-acid polypeptide reads, in one-letter code: ATP-dependent kinase YFH7 (353 aa).

31–39 (GSPGSGKST) serves as a coordination point for ATP.

Belongs to the YFH7 family.

Its function is as follows. ATP-dependent kinase that could be involved in endoplasmic reticulum membrane assembly. The protein is ATP-dependent kinase YFH7 (YFH7) of Saccharomyces cerevisiae (strain JAY291) (Baker's yeast).